Here is a 101-residue protein sequence, read N- to C-terminus: MAKKGMINRELKREKTVAKYAAKRAELKATIANVNASDEERFEAMLKLQALPRNASPVRLRNRCGLTGRPHGYFRKFGLSRNKLRDTVMQGDVPGVVKASW.

The protein belongs to the universal ribosomal protein uS14 family. Part of the 30S ribosomal subunit. Contacts proteins S3 and S10.

Binds 16S rRNA, required for the assembly of 30S particles and may also be responsible for determining the conformation of the 16S rRNA at the A site. This chain is Small ribosomal subunit protein uS14, found in Acinetobacter baumannii (strain AB307-0294).